Here is a 358-residue protein sequence, read N- to C-terminus: Ribosomal RNA-processing protein 8 (358 aa).

Residues 1–81 (MKPFEVPPWE…PQDSSDDDYE (81 aa)) form a disordered region. The span at 30–44 (AKKKPKKKKPKKKKA) shows a compositional bias: basic residues. 2 positions are modified to phosphoserine: S75 and S76. Positions 185, 220, 238, and 267 each coordinate S-adenosyl-L-methionine.

It belongs to the methyltransferase superfamily. RRP8 family.

Its subcellular location is the nucleus. The protein resides in the nucleolus. Functionally, probable methyltransferase required to silence rDNA. This is Ribosomal RNA-processing protein 8 from Drosophila melanogaster (Fruit fly).